The sequence spans 210 residues: Potassium-transporting ATPase KdpC subunit (210 aa).

Residues 13 to 33 traverse the membrane as a helical segment; it reads LVTLVLLLVCGLAYPLILTGI.

Belongs to the KdpC family. In terms of assembly, the system is composed of three essential subunits: KdpA, KdpB and KdpC.

Its subcellular location is the cell membrane. In terms of biological role, part of the high-affinity ATP-driven potassium transport (or Kdp) system, which catalyzes the hydrolysis of ATP coupled with the electrogenic transport of potassium into the cytoplasm. This subunit acts as a catalytic chaperone that increases the ATP-binding affinity of the ATP-hydrolyzing subunit KdpB by the formation of a transient KdpB/KdpC/ATP ternary complex. The sequence is that of Potassium-transporting ATPase KdpC subunit from Clostridium kluyveri (strain ATCC 8527 / DSM 555 / NBRC 12016 / NCIMB 10680 / K1).